Consider the following 200-residue polypeptide: Recombination protein RecR (200 aa).

The segment at 60-75 adopts a C4-type zinc-finger fold; that stretch reads CVYCQALTEDDVCNIC. One can recognise a Toprim domain in the interval 83–177; the sequence is TKLCIIESML…KISRIGFGVP (95 aa).

It belongs to the RecR family.

Its function is as follows. May play a role in DNA repair. It seems to be involved in an RecBC-independent recombinational process of DNA repair. It may act with RecF and RecO. The protein is Recombination protein RecR of Francisella tularensis subsp. holarctica (strain OSU18).